The chain runs to 154 residues: Transcriptional repressor NrdR (154 aa).

The segment at 3 to 34 (CPFCTHPDTRVADSRLMEERNAVRRRRHCPNC) is a zinc-finger region. The region spanning 49 to 139 (PAVIGPDKKR…LHKRFDNPAD (91 aa)) is the ATP-cone domain.

It belongs to the NrdR family. It depends on Zn(2+) as a cofactor.

Its function is as follows. Negatively regulates transcription of bacterial ribonucleotide reductase nrd genes and operons by binding to NrdR-boxes. This chain is Transcriptional repressor NrdR, found in Neisseria meningitidis serogroup A / serotype 4A (strain DSM 15465 / Z2491).